A 247-amino-acid polypeptide reads, in one-letter code: Protein NipSnap homolog 3A (247 aa).

N6-acetyllysine occurs at positions 48 and 166.

Belongs to the NipSnap family. In terms of assembly, interacts with the Salmonella typhimurium virulence protein spiC. Ubiquitous. Highly expressed in liver, kidney and muscle. Expressed at intermediate level in brain, heart, colon, thymus, kidney, small intestine, placenta, lung, leukocytes and spleen.

The protein resides in the cytoplasm. It is found in the cytosol. The chain is Protein NipSnap homolog 3A (NIPSNAP3A) from Homo sapiens (Human).